A 93-amino-acid chain; its full sequence is MDGIKYIVFTEKSIRLLGNNQYTSNVESGSTRTEIKHWVELFFGVKVIAMNSHRLQGKGRRMGPIIGHTMHYRRMIITLQPGYSIPPLIEKRT.

It belongs to the universal ribosomal protein uL23 family. As to quaternary structure, part of the 50S ribosomal subunit.

It localises to the plastid. The protein resides in the chloroplast. Binds to 23S rRNA. In Piper cenocladum (Ant piper), this protein is Large ribosomal subunit protein uL23cz/uL23cy (rpl23-A).